We begin with the raw amino-acid sequence, 128 residues long: Small ribosomal subunit protein eS8 (128 aa).

The protein belongs to the eukaryotic ribosomal protein eS8 family. Part of the 30S ribosomal subunit.

The sequence is that of Small ribosomal subunit protein eS8 from Methanococcus maripaludis (strain C6 / ATCC BAA-1332).